Consider the following 449-residue polypeptide: UDP-N-acetylmuramoylalanine--D-glutamate ligase (449 aa).

An ATP-binding site is contributed by 113–119; that stretch reads GTNGKTT.

Belongs to the MurCDEF family.

It localises to the cytoplasm. It catalyses the reaction UDP-N-acetyl-alpha-D-muramoyl-L-alanine + D-glutamate + ATP = UDP-N-acetyl-alpha-D-muramoyl-L-alanyl-D-glutamate + ADP + phosphate + H(+). Its pathway is cell wall biogenesis; peptidoglycan biosynthesis. In terms of biological role, cell wall formation. Catalyzes the addition of glutamate to the nucleotide precursor UDP-N-acetylmuramoyl-L-alanine (UMA). This Microcystis aeruginosa (strain NIES-843 / IAM M-2473) protein is UDP-N-acetylmuramoylalanine--D-glutamate ligase.